Here is a 216-residue protein sequence, read N- to C-terminus: Ribosomal RNA large subunit methyltransferase E (216 aa).

Gly60, Trp62, Asp80, Asp96, and Asp121 together coordinate S-adenosyl-L-methionine. The active-site Proton acceptor is Lys161.

It belongs to the class I-like SAM-binding methyltransferase superfamily. RNA methyltransferase RlmE family.

It is found in the cytoplasm. The catalysed reaction is uridine(2552) in 23S rRNA + S-adenosyl-L-methionine = 2'-O-methyluridine(2552) in 23S rRNA + S-adenosyl-L-homocysteine + H(+). Its function is as follows. Specifically methylates the uridine in position 2552 of 23S rRNA at the 2'-O position of the ribose in the fully assembled 50S ribosomal subunit. This is Ribosomal RNA large subunit methyltransferase E from Pseudomonas savastanoi pv. phaseolicola (strain 1448A / Race 6) (Pseudomonas syringae pv. phaseolicola (strain 1448A / Race 6)).